The following is a 408-amino-acid chain: FAD-dependent monooxygenase nscC (408 aa).

Positions 1–20 are cleaved as a signal peptide; it reads MASRLPILIIGAGISGLTTA. Residues Glu-34 and Ala-45 each coordinate FAD. Asn-91 and Asn-103 each carry an N-linked (GlcNAc...) asparagine glycan. Residue Arg-119 participates in FAD binding. 2 N-linked (GlcNAc...) asparagine glycosylation sites follow: Asn-170 and Asn-231. Residues Asp-328 and Gly-341 each coordinate FAD.

Belongs to the paxM FAD-dependent monooxygenase family. FAD serves as cofactor.

Its pathway is secondary metabolite biosynthesis. FAD-dependent monooxygenase; part of the gene cluster that mediates the biosynthesis of neosartoricin, a prenylated anthracenone that exhibits T-cell antiproliferative activity, suggestive of a physiological role as an immunosuppressive agent. The non-reducing polyketide synthase nscA probably synthesizes and cyclizes the decaketide backbone. The hydrolase nscB then mediates the product release through hydrolysis followed by spontaneous decarboxylation. The prenyltransferase nscD catalyzes the addition of the dimethylallyl group to the aromatic C5. The FAD-dependent monooxygenase nscC is then responsible for the stereospecific hydroxylation at C2. There is no gene encoding O-acetyltransferase in the nsc gene cluster; thus, the last step of 2-O-acetylation leading to neosartoricin may be catalyzed by an unidentified O-acetyltransferase. This Aspergillus fumigatus (strain ATCC MYA-4609 / CBS 101355 / FGSC A1100 / Af293) (Neosartorya fumigata) protein is FAD-dependent monooxygenase nscC.